The following is a 329-amino-acid chain: uncharacterized protein (329 aa).

Coiled coils occupy residues 57–119 (KKEE…LQEV) and 224–250 (AQRQ…LGNV).

This is an uncharacterized protein from Macaca fascicularis (Crab-eating macaque).